The chain runs to 541 residues: Chaperonin GroEL 2 (541 aa).

Residues 29–32, 86–90, G413, and D492 contribute to the ATP site; these read TLGP and DGTTT.

This sequence belongs to the chaperonin (HSP60) family. Forms a cylinder of 14 subunits composed of two heptameric rings stacked back-to-back. Interacts with the co-chaperonin GroES.

It localises to the cytoplasm. The catalysed reaction is ATP + H2O + a folded polypeptide = ADP + phosphate + an unfolded polypeptide.. Its function is as follows. Together with its co-chaperonin GroES, plays an essential role in assisting protein folding. The GroEL-GroES system forms a nano-cage that allows encapsulation of the non-native substrate proteins and provides a physical environment optimized to promote and accelerate protein folding. The chain is Chaperonin GroEL 2 from Nocardia farcinica (strain IFM 10152).